Here is a 260-residue protein sequence, read N- to C-terminus: Snake venom serine protease Dav-X (260 aa).

The N-terminal stretch at 1–18 is a signal peptide; it reads MVLIRVLANLLILQLSYA. A propeptide spanning residues 19-24 is cleaved from the precursor; the sequence is QKSSEL. The Peptidase S1 domain occupies 25–251; the sequence is VIGGVECDIN…YTDWIQNIIA (227 aa). 6 cysteine pairs are disulfide-bonded: cysteine 31-cysteine 165, cysteine 52-cysteine 68, cysteine 102-cysteine 258, cysteine 144-cysteine 212, cysteine 176-cysteine 191, and cysteine 202-cysteine 227. The Charge relay system role is filled by histidine 67. Asparagine 81 is a glycosylation site (N-linked (GlcNAc...) asparagine). Residue aspartate 112 is the Charge relay system of the active site. N-linked (GlcNAc...) asparagine glycans are attached at residues asparagine 124 and asparagine 172. The Charge relay system role is filled by serine 206. Asparagine 241 carries N-linked (GlcNAc...) asparagine glycosylation.

It belongs to the peptidase S1 family. Snake venom subfamily. Monomer. As to expression, expressed by the venom gland.

The protein resides in the secreted. Its function is as follows. Snake venom serine protease that may act in the hemostasis system of the prey. This is Snake venom serine protease Dav-X from Deinagkistrodon acutus (Hundred-pace snake).